Here is a 372-residue protein sequence, read N- to C-terminus: Cell division protein FtsZ 1 (372 aa).

GTP-binding positions include 51–55 (GAGCN), 138–140 (GTG), Glu169, Arg173, and Asp216. Residues 352 to 372 (EETPAPSEEETTPVKIDIPEL) are disordered.

Belongs to the FtsZ family. Homodimer. Polymerizes to form a dynamic ring structure in a strictly GTP-dependent manner. Interacts directly with several other division proteins.

Its subcellular location is the cytoplasm. In terms of biological role, essential cell division protein that forms a contractile ring structure (Z ring) at the future cell division site. The regulation of the ring assembly controls the timing and the location of cell division. One of the functions of the FtsZ ring is to recruit other cell division proteins to the septum to produce a new cell wall between the dividing cells. Binds GTP and shows GTPase activity. This is Cell division protein FtsZ 1 from Pyrococcus horikoshii (strain ATCC 700860 / DSM 12428 / JCM 9974 / NBRC 100139 / OT-3).